Here is a 621-residue protein sequence, read N- to C-terminus: F-box/LRR-repeat protein 4 (621 aa).

Asymmetric dimethylarginine is present on R28. Residues 277 to 332 form the F-box domain; sequence NGYFDKLPYELIQLILNHLTLPDLCRLAQTCKLLSQHCCDPLQYIHLNLQPYWAKL. LRR repeat units follow at residues 376–397, 402–421, 427–448, 452–474, 480–501, 504–524, 532–558, 559–583, and 584–609; these read ELVR…EVIS, NLQA…AFNH, SLKR…SILN, ELQH…ASMI, KLRT…AELA, CPLL…STGC, LPNL…ACNC, TRLQ…LLES, and CKDL…LNAS.

In terms of assembly, part of a SCF (SKP1-CUL1-F-box) protein ligase complex. Interacts with VCP. Interacts with PPTC7; this interaction promotes destruction of BNIP3 and NIX and mitophagy suppression. In terms of tissue distribution, expressed in heart, kidney, liver, lung, pancreas, and placenta, but not in skeletal muscle.

Its subcellular location is the cytoplasm. It localises to the nucleus. It is found in the mitochondrion outer membrane. Substrate-recognition component of the mitochondria-localized SCF-FBXL4 ubiquitin E3 ligase complex that plays a role in the restriction of mitophagy by controlling the degradation of BNIP3 and NIX mitophagy receptors. Rescues also mitochondrial injury through reverting hyperactivation of DRP1-mediated mitochondrial fission. The chain is F-box/LRR-repeat protein 4 (FBXL4) from Homo sapiens (Human).